The chain runs to 235 residues: Small ribosomal subunit protein uS2 (235 aa).

Belongs to the universal ribosomal protein uS2 family.

This Thermoanaerobacter sp. (strain X514) protein is Small ribosomal subunit protein uS2.